A 212-amino-acid chain; its full sequence is ATP-dependent Clp protease proteolytic subunit (212 aa).

The Nucleophile role is filled by serine 107. The active site involves histidine 132.

Belongs to the peptidase S14 family. As to quaternary structure, fourteen ClpP subunits assemble into 2 heptameric rings which stack back to back to give a disk-like structure with a central cavity, resembling the structure of eukaryotic proteasomes.

It localises to the cytoplasm. The catalysed reaction is Hydrolysis of proteins to small peptides in the presence of ATP and magnesium. alpha-casein is the usual test substrate. In the absence of ATP, only oligopeptides shorter than five residues are hydrolyzed (such as succinyl-Leu-Tyr-|-NHMec, and Leu-Tyr-Leu-|-Tyr-Trp, in which cleavage of the -Tyr-|-Leu- and -Tyr-|-Trp bonds also occurs).. In terms of biological role, cleaves peptides in various proteins in a process that requires ATP hydrolysis. Has a chymotrypsin-like activity. Plays a major role in the degradation of misfolded proteins. This Pseudoalteromonas atlantica (strain T6c / ATCC BAA-1087) protein is ATP-dependent Clp protease proteolytic subunit.